Here is a 203-residue protein sequence, read N- to C-terminus: Akirin-2 (203 aa).

2 positions are modified to phosphoserine: Ser-18 and Ser-21. A Nuclear localization signal motif is present at residues Pro-22–Cys-27. Ser-57 is subject to Phosphoserine. The SYVS motif signature appears at Ser-200–Ser-203.

The protein belongs to the akirin family. In terms of assembly, homodimer. Interacts with IPO9; the interaction is direct. Associates (via SYVS motif) with 20S and 26S proteasomes. Interacts with SMARCD1; promoting SWI/SNF complex recruitment. Interacts with NFKBIZ. Interacts with YWHAB. Polyubiquitinated. Polyubiquitination is dependent of UBR5 that extends pre-ubiquitinated AKIRIN2. As to expression, widely expressed with the highest expression in peripheral blood leukocytes.

The protein localises to the nucleus. The protein resides in the cytoplasm. It localises to the membrane. Molecular adapter that acts as a bridge between a variety of multiprotein complexes, and which is involved in embryonic development, immunity, myogenesis and brain development. Plays a key role in nuclear protein degradation by promoting import of proteasomes into the nucleus: directly binds to fully assembled 20S proteasomes at one end and to nuclear import receptor IPO9 at the other end, bridging them together and mediating the import of pre-assembled proteasome complexes through the nuclear pore. Involved in innate immunity by regulating the production of interleukin-6 (IL6) downstream of Toll-like receptor (TLR): acts by bridging the NF-kappa-B inhibitor NFKBIZ and the SWI/SNF complex, leading to promote induction of IL6. Also involved in adaptive immunity by promoting B-cell activation. Involved in brain development: required for the survival and proliferation of cerebral cortical progenitor cells. Involved in myogenesis: required for skeletal muscle formation and skeletal development, possibly by regulating expression of muscle differentiation factors. Also plays a role in facilitating interdigital tissue regression during limb development. This Homo sapiens (Human) protein is Akirin-2.